A 294-amino-acid chain; its full sequence is GTPase Era (294 aa).

Residues Lys-3–Glu-170 enclose the Era-type G domain. The tract at residues Gly-11 to Ser-18 is G1. Gly-11–Ser-18 contributes to the GTP binding site. Positions Gln-37–Asn-41 are G2. Residues Asp-58 to Gly-61 are G3. GTP is bound by residues Asp-58 to Ile-62 and Asn-120 to Asp-123. The G4 stretch occupies residues Asn-120 to Asp-123. The tract at residues Ile-149–Ala-151 is G5. Residues Leu-201–Lys-278 form the KH type-2 domain.

It belongs to the TRAFAC class TrmE-Era-EngA-EngB-Septin-like GTPase superfamily. Era GTPase family. Monomer.

It localises to the cytoplasm. It is found in the cell membrane. Functionally, an essential GTPase that binds both GDP and GTP, with rapid nucleotide exchange. Plays a role in 16S rRNA processing and 30S ribosomal subunit biogenesis and possibly also in cell cycle regulation and energy metabolism. The chain is GTPase Era from Clostridium novyi (strain NT).